The primary structure comprises 700 residues: Probable pre-mRNA-splicing factor ATP-dependent RNA helicase DEAH4 (700 aa).

The residue at position 2 (alanine 2) is an N-acetylalanine. In terms of domain architecture, Helicase ATP-binding spans 14-178 (VETVEKNSVV…FSGCPVLNVP (165 aa)). 27–34 (GETGSGKS) is an ATP binding site. Positions 124-127 (DEAH) match the DEAH box motif. One can recognise a Helicase C-terminal domain in the interval 200-377 (SLKVAIDIHV…GSVLYLKSLD (178 aa)). 2 disordered regions span residues 463 to 486 (PARS…NGSG) and 654 to 682 (GPAP…SENV).

This sequence belongs to the DEAD box helicase family. DEAH subfamily. PRP22 sub-subfamily.

It carries out the reaction ATP + H2O = ADP + phosphate + H(+). In terms of biological role, may be involved in pre-mRNA splicing. This chain is Probable pre-mRNA-splicing factor ATP-dependent RNA helicase DEAH4, found in Arabidopsis thaliana (Mouse-ear cress).